The chain runs to 80 residues: Exodeoxyribonuclease 7 small subunit (80 aa).

It belongs to the XseB family. Heterooligomer composed of large and small subunits.

It localises to the cytoplasm. It catalyses the reaction Exonucleolytic cleavage in either 5'- to 3'- or 3'- to 5'-direction to yield nucleoside 5'-phosphates.. Its function is as follows. Bidirectionally degrades single-stranded DNA into large acid-insoluble oligonucleotides, which are then degraded further into small acid-soluble oligonucleotides. This is Exodeoxyribonuclease 7 small subunit from Rickettsia africae (strain ESF-5).